Consider the following 91-residue polypeptide: Large ribosomal subunit protein bL27 (91 aa).

The tract at residues 1 to 22 is disordered; it reads MAHKKAGGSSRNGRDSDGRRLG.

Belongs to the bacterial ribosomal protein bL27 family.

The protein is Large ribosomal subunit protein bL27 of Beijerinckia indica subsp. indica (strain ATCC 9039 / DSM 1715 / NCIMB 8712).